The chain runs to 777 residues: Androgen receptor (777 aa).

Residues 1-416 are modulating; that stretch reads MEVHIGLGGV…IDYYFPPQKP (416 aa). Disordered stretches follow at residues 53 to 95, 110 to 132, and 205 to 241; these read CVHP…QAPQ, GEQG…YPES, and RRAG…LSEP. 2 NR C4-type zinc fingers span residues 417-434 and 453-472; these read CLSC…ALTC and CASR…CPSC. Residues 417-489 constitute a DNA-binding region (nuclear receptor); the sequence is CLSCEDEASG…AGMTLGARKL (73 aa). The NR LBD domain maps to 526–757; sequence SCQPIFLNVL…DFPEMMSEII (232 aa). 3 residues coordinate 17beta-hydroxy-5alpha-androstan-3-one: Asn563, Arg610, and Thr735.

Belongs to the nuclear hormone receptor family. NR3 subfamily. Binds DNA as a homodimer. Interacts via the ligand-binding domain with LXXLL and FXXLF motifs from coactivator proteins. Interacts (via ligand-binding domain) with TRIM68. As to expression, detected in somatic Leydig and Sertoli cells in testis with high level expression. Also detected at lower expression levels in forebrain and heart.

Its subcellular location is the nucleus. The protein resides in the cytoplasm. In terms of biological role, steroid hormone receptors are ligand-activated transcription factors that regulate eukaryotic gene expression and affect cellular proliferation and differentiation in target tissues. Transcription factor activity is modulated by bound coactivator and corepressor proteins. The polypeptide is Androgen receptor (ar) (Aquarana catesbeiana (American bullfrog)).